The primary structure comprises 1091 residues: Rho GTPase-activating protein 7 (1091 aa).

Residues 11 to 78 form the SAM domain; that stretch reads LTQIEAKEAC…LNKCAVMKLE (68 aa). Phosphoserine is present on residues S86, S89, and S129. 4 disordered regions span residues 120 to 181, 296 to 329, 402 to 439, and 491 to 552; these read SPKQ…TTPR, RSVS…TRSL, RTGS…SSRM, and SDEG…SGVG. A compositionally biased stretch (polar residues) spans 130–143; it reads PDNSRLQSATSRES. 2 stretches are compositionally biased toward low complexity: residues 155-166 and 298-324; these read SSIRSLSSTSSS and VSNS…SPVT. A focal adhesion-targeting (FAT) region spans residues 274-447; that stretch reads QLNCVEISAL…RMSIYDNVPG (174 aa). The residue at position 321 (S321) is a Phosphoserine. A compositionally biased stretch (basic and acidic residues) spans 414-425; the sequence is LRRENSSDSPKE. Positions 499-511 are enriched in polar residues; the sequence is ALDSVSPCPSSPK. The segment covering 513–525 has biased composition (basic and acidic residues); sequence IHLDVDHDRRTPS. Positions 526-535 are enriched in polar residues; it reads DLDSTGNSLN. The interval 614 to 636 is polybasic cluster (PBR); sequence KHGFSWAVPKFMKRIKVPDYKDR. Residues 641–847 enclose the Rho-GAP domain; sequence VPLTVNVQRS…HMIAECKKLF (207 aa). Residues 877-1084 enclose the START domain; sequence SNDQPADYRH…RDSFSNQSTE (208 aa).

As to quaternary structure, interacts with EF1A1, facilitates EF1A1 distribution to the membrane periphery and ruffles upon growth factor stimulation and suppresses cell migration. Interacts with tensin TNS1 (via N-terminus); the interaction is decreased by phosphorylation of TNS1. Interacts with TNS3 and PTEN; in resting cells, interacts with TNS3 (via C2 tensin-type domain) but, following growth factor stimulation, TNS3 and PTEN are phosphorylated which leads to weakened interaction with TNS3 and enhanced interaction with PTEN. Interacts (via C-terminus) with tensin TNS4 (via SH2 domain); the interaction is independent of tyrosine phosphorylation of DLC1.

It localises to the cytoplasm. The protein localises to the cell junction. The protein resides in the focal adhesion. It is found in the membrane. Its function is as follows. Functions as a GTPase-activating protein for the small GTPases RHOA, RHOB, RHOC and CDC42, terminating their downstream signaling. This induces morphological changes and detachment through cytoskeletal reorganization, playing a critical role in biological processes such as cell migration and proliferation. Also functions in vivo as an activator of the phospholipase PLCD1. Active DLC1 increases cell migration velocity but reduces directionality. Required for growth factor-induced epithelial cell migration; in resting cells, interacts with TNS3 while PTEN interacts with the p85 regulatory subunit of the PI3K kinase complex but growth factor stimulation induces phosphorylation of TNS3 and PTEN, causing them to change their binding preference so that PTEN interacts with DLC1 and TNS3 interacts with p85. The PTEN-DLC1 complex translocates to the posterior of migrating cells to activate RHOA while the TNS3-p85 complex translocates to the leading edge of migrating cells to promote RAC1 activation. This is Rho GTPase-activating protein 7 (Dlc1) from Rattus norvegicus (Rat).